Reading from the N-terminus, the 308-residue chain is Large ribosomal subunit protein mL38 (308 aa).

Residues 1 to 17 (MKRVWPRIPTISNVCRA) constitute a mitochondrion transit peptide.

This sequence belongs to the phosphatidylethanolamine-binding protein family. Mitochondrion-specific ribosomal protein mL38 subfamily. In terms of assembly, component of the mitochondrial large ribosomal subunit (mt-LSU). Mature yeast 74S mitochondrial ribosomes consist of a small (37S) and a large (54S) subunit. The 37S small subunit contains a 15S ribosomal RNA (15S mt-rRNA) and at least 32 different proteins. The 54S large subunit contains a 21S rRNA (21S mt-rRNA) and at least 45 different proteins.

It localises to the mitochondrion. Its function is as follows. Component of the mitochondrial ribosome (mitoribosome), a dedicated translation machinery responsible for the synthesis of mitochondrial genome-encoded proteins, including at least some of the essential transmembrane subunits of the mitochondrial respiratory chain. The mitoribosomes are attached to the mitochondrial inner membrane and translation products are cotranslationally integrated into the membrane. The polypeptide is Large ribosomal subunit protein mL38 (mrpl35) (Schizosaccharomyces pombe (strain 972 / ATCC 24843) (Fission yeast)).